The primary structure comprises 171 residues: Peptide deformylase (171 aa).

Residues C91 and H133 each coordinate Fe cation. The active site involves E134. Position 137 (H137) interacts with Fe cation.

This sequence belongs to the polypeptide deformylase family. Fe(2+) serves as cofactor.

The enzyme catalyses N-terminal N-formyl-L-methionyl-[peptide] + H2O = N-terminal L-methionyl-[peptide] + formate. Its function is as follows. Removes the formyl group from the N-terminal Met of newly synthesized proteins. Requires at least a dipeptide for an efficient rate of reaction. N-terminal L-methionine is a prerequisite for activity but the enzyme has broad specificity at other positions. The polypeptide is Peptide deformylase (Hamiltonella defensa subsp. Acyrthosiphon pisum (strain 5AT)).